We begin with the raw amino-acid sequence, 170 residues long: Photosystem I assembly protein Ycf3 (170 aa).

3 TPR repeats span residues 35-68 (AFTY…EIDP), 72-105 (SYIL…NPFL), and 120-153 (GEQA…TPGN).

Belongs to the Ycf3 family.

The protein resides in the plastid. Its subcellular location is the chloroplast thylakoid membrane. Its function is as follows. Essential for the assembly of the photosystem I (PSI) complex. May act as a chaperone-like factor to guide the assembly of the PSI subunits. This chain is Photosystem I assembly protein Ycf3, found in Saccharum officinarum (Sugarcane).